A 1396-amino-acid chain; its full sequence is Sterol 3-beta-glucosyltransferase (1396 aa).

A compositionally biased stretch (basic and acidic residues) spans 1 to 16 (MRPFIDDAKRRAERRL). Disordered regions lie at residues 1–21 (MRPFIDDAKRRAERRLSASRQ), 40–64 (DADDAQMDYTAPPSSNDSRDGMQYM), 83–196 (ARFD…RAAP), and 209–232 (ETENPEENPQTLEEKEQGVSKKSQ). Over residues 94-107 (ETRTRPRFLSEKPF) the composition is skewed to basic and acidic residues. The segment covering 186–196 (RPRSATPRAAP) has biased composition (low complexity). The 36-residue stretch at 238–273 (RQLMEMFRFPTPEKVVVEYACSLLQSMLLQGYMYVT) folds into the GRAM 1 domain. The region spanning 289–388 (RVIKSGYIYK…WVRALQKVIF (100 aa)) is the PH domain. 2 disordered regions span residues 460-532 (GTPT…SSSS) and 571-627 (TIHT…ESKD). Composition is skewed to polar residues over residues 484–532 (GSQN…SSSS) and 571–584 (TIHTWQQRTSGTAR). Over residues 588–602 (RHSDEITRSTTEHGL) the composition is skewed to basic and acidic residues. A GRAM 2 domain is found at 717–783 (ERFRAHFALP…HDIENVEKEK (67 aa)). Residues serine 905, arginine 906, aspartate 908, alanine 1208, histidine 1210, histidine 1223, glycine 1227, threonine 1228, aspartate 1247, and glutamine 1248 each coordinate UDP-alpha-D-glucose. The segment covering 1324 to 1343 (SSISSTPFSPTPSTKTSDDQ) has biased composition (low complexity). Residues 1324–1346 (SSISSTPFSPTPSTKTSDDQNAN) are disordered.

This sequence belongs to the glycosyltransferase 28 family.

Its subcellular location is the cytoplasm. It is found in the preautophagosomal structure membrane. It carries out the reaction a sterol + UDP-alpha-D-glucose = a sterol 3-beta-D-glucoside + UDP + H(+). The enzyme catalyses ergosterol + UDP-alpha-D-glucose = ergosteryl 3-beta-D-glucoside + UDP + H(+). Sterol glycosyltransferase responsible for the glycosylation of ergosterol to form ergosterol-glucoside. The polypeptide is Sterol 3-beta-glucosyltransferase (Emericella nidulans (strain FGSC A4 / ATCC 38163 / CBS 112.46 / NRRL 194 / M139) (Aspergillus nidulans)).